Consider the following 736-residue polypeptide: MNPCNNITITPEIIAQHGLKEDEYQRILTLIGREPTFTELGIFSAMWNEHCSYKSSKKWLKTLPTEGKCVIQGPGENAGVVDIGEGQCVVFKMESHNHPSYIEPYQGAATGVGGILRDVFTMGARPVAAMNALRFGAPDHPRTRHLVSGVVSGIGGYSNSFGVPTVGGEVNFDKRYNGNILVNAFVAGIAKTDALFYSKAQGIGLPVVYLGAKTGRDGVGGATMASAEFDDSISEKRPTVQVGDPFTEKCLLEACLELMELGAVVAIQDMGAAGLTSSAVEMGAKGNLGIQLNLDTVPVREENMTAYEMMLSESQERMLMVLKPELEKQAAAIFHKWGLHFSIIGKTTDDLRFRVFHQGEEVVNLPIKELGDEAPVYDRPWSEPVKKTLLKAEDVKKVENLGDALLTLLNSADQSSRRWVYEQYDTLIQGNSLICPGSDAGVIRISNKSKRALAFSSDVTPRYCEADPYEGGKQAVAECWRNISTTGATPLAATDNLNFGNPEKPEIMGQLVFAIKGIGEACRILDFPIVSGNVSLYNETNGGAILPTPTIAGVGLLSDWSKMVTISGMQNGDHIILVGDCGSHLGQSIYARDILNIDAGAPPPVDLQLEKRHGQFVRDVIHNGFVHAAHDISDGGLAIALAEMVIKAGKGIKAKLSNKSPHHAELFGEDQGRYLLAVKPEALNNLKEYAQTHAVSLTELGQVEGDSLNIDGIFTLSVESLIQAYENWFPKFMGEE.

The active site involves His-50. Residues Tyr-53 and Lys-92 each contribute to the ATP site. Glu-94 lines the Mg(2+) pocket. Residues 95–98 (SHNH) and Arg-117 each bind substrate. His-96 acts as the Proton acceptor in catalysis. Residue Asp-118 coordinates Mg(2+). Residue Gln-241 participates in substrate binding. A Mg(2+)-binding site is contributed by Asp-269. 313-315 (ESQ) contacts substrate. Asp-495 and Gly-532 together coordinate ATP. Asn-533 is a Mg(2+) binding site. Ser-535 lines the substrate pocket.

The protein belongs to the FGAMS family. As to quaternary structure, monomer. Part of the FGAM synthase complex composed of 1 PurL, 1 PurQ and 2 PurS subunits.

The protein localises to the cytoplasm. It carries out the reaction N(2)-formyl-N(1)-(5-phospho-beta-D-ribosyl)glycinamide + L-glutamine + ATP + H2O = 2-formamido-N(1)-(5-O-phospho-beta-D-ribosyl)acetamidine + L-glutamate + ADP + phosphate + H(+). Its pathway is purine metabolism; IMP biosynthesis via de novo pathway; 5-amino-1-(5-phospho-D-ribosyl)imidazole from N(2)-formyl-N(1)-(5-phospho-D-ribosyl)glycinamide: step 1/2. Functionally, part of the phosphoribosylformylglycinamidine synthase complex involved in the purines biosynthetic pathway. Catalyzes the ATP-dependent conversion of formylglycinamide ribonucleotide (FGAR) and glutamine to yield formylglycinamidine ribonucleotide (FGAM) and glutamate. The FGAM synthase complex is composed of three subunits. PurQ produces an ammonia molecule by converting glutamine to glutamate. PurL transfers the ammonia molecule to FGAR to form FGAM in an ATP-dependent manner. PurS interacts with PurQ and PurL and is thought to assist in the transfer of the ammonia molecule from PurQ to PurL. The polypeptide is Phosphoribosylformylglycinamidine synthase subunit PurL (Bartonella tribocorum (strain CIP 105476 / IBS 506)).